A 216-amino-acid chain; its full sequence is Ephrin-A1 (216 aa).

The first 28 residues, 1 to 28, serve as a signal peptide directing secretion; sequence MMELYRAAVQLIVGVGLGVGLWLREAQG. Residues 29–161 enclose the Ephrin RBD domain; that stretch reads ERHIVFWNSS…RLRVHVSGRT (133 aa). The N-linked (GlcNAc...) asparagine glycan is linked to asparagine 36. Cysteine 61 and cysteine 102 are oxidised to a cystine. The segment at 162–181 is disordered; that stretch reads TPPPVNVHTPRSHIQSDEPE. Serine 195 is lipidated: GPI-anchor amidated serine. Positions 196-216 are cleaved as a propeptide — removed in mature form; that stretch reads AAPGTPCTLYGLLLAALLLRL.

It belongs to the ephrin family. In terms of assembly, binds to the receptor tyrosine kinases EPHA2, EPHA4, EPHA5, EPHA6 and EPHA7. Also binds with low affinity to EPHA1.

The protein localises to the membrane. Its function is as follows. Cell surface GPI-bound ligand for Eph receptors, a family of receptor tyrosine kinases which are crucial for migration, repulsion and adhesion during neuronal, vascular and epithelial development. Binds promiscuously Eph receptors residing on adjacent cells, leading to contact-dependent bidirectional signaling into neighboring cells. The protein is Ephrin-A1 (efna1) of Xenopus laevis (African clawed frog).